The chain runs to 173 residues: Adenine phosphoribosyltransferase (173 aa).

It belongs to the purine/pyrimidine phosphoribosyltransferase family. As to quaternary structure, homodimer.

Its subcellular location is the cytoplasm. The enzyme catalyses AMP + diphosphate = 5-phospho-alpha-D-ribose 1-diphosphate + adenine. The protein operates within purine metabolism; AMP biosynthesis via salvage pathway; AMP from adenine: step 1/1. In terms of biological role, catalyzes a salvage reaction resulting in the formation of AMP, that is energically less costly than de novo synthesis. This chain is Adenine phosphoribosyltransferase, found in Ureaplasma parvum serovar 3 (strain ATCC 27815 / 27 / NCTC 11736).